The primary structure comprises 128 residues: RutC family protein BUsg_359 (128 aa).

It belongs to the RutC family.

The chain is RutC family protein BUsg_359 from Buchnera aphidicola subsp. Schizaphis graminum (strain Sg).